Consider the following 217-residue polypeptide: Uracil-DNA glycosylase (217 aa).

The Proton acceptor role is filled by Asp-62.

The protein belongs to the uracil-DNA glycosylase (UDG) superfamily. UNG family.

It localises to the cytoplasm. It catalyses the reaction Hydrolyzes single-stranded DNA or mismatched double-stranded DNA and polynucleotides, releasing free uracil.. In terms of biological role, excises uracil residues from the DNA which can arise as a result of misincorporation of dUMP residues by DNA polymerase or due to deamination of cytosine. This is Uracil-DNA glycosylase from Streptococcus pyogenes serotype M4 (strain MGAS10750).